A 215-amino-acid polypeptide reads, in one-letter code: UPF0502 protein YceH (215 aa).

Belongs to the UPF0502 family.

The protein is UPF0502 protein YceH of Salmonella paratyphi B (strain ATCC BAA-1250 / SPB7).